We begin with the raw amino-acid sequence, 164 residues long: MSVTIGELIGNFILVTGSVIVLLLLIKAFAWGAIEAVLQARSQQISQDIDQAEQARLNAQQLEKEGQANLEASRSEASQIVEAAKETGKAQETRIVAEATEEADRLKAVALTDIEHSKSEAISAVKTEMSDLTVLLAEKIMGANLDKAAQSQLIDRYLDDLGEA.

The helical transmembrane segment at Phe-12–Gly-32 threads the bilayer.

Belongs to the ATPase B chain family. In terms of assembly, F-type ATPases have 2 components, F(1) - the catalytic core - and F(0) - the membrane proton channel. F(1) has five subunits: alpha(3), beta(3), gamma(1), delta(1), epsilon(1). F(0) has three main subunits: a(1), b(2) and c(10-14). The alpha and beta chains form an alternating ring which encloses part of the gamma chain. F(1) is attached to F(0) by a central stalk formed by the gamma and epsilon chains, while a peripheral stalk is formed by the delta and b chains.

It localises to the cell membrane. F(1)F(0) ATP synthase produces ATP from ADP in the presence of a proton or sodium gradient. F-type ATPases consist of two structural domains, F(1) containing the extramembraneous catalytic core and F(0) containing the membrane proton channel, linked together by a central stalk and a peripheral stalk. During catalysis, ATP synthesis in the catalytic domain of F(1) is coupled via a rotary mechanism of the central stalk subunits to proton translocation. In terms of biological role, component of the F(0) channel, it forms part of the peripheral stalk, linking F(1) to F(0). This chain is ATP synthase subunit b, found in Streptococcus equi subsp. zooepidemicus (strain MGCS10565).